The chain runs to 1000 residues: UPF0182 protein SCO5204 (1000 aa).

Transmembrane regions (helical) follow at residues 26 to 48, 70 to 92, 121 to 143, 177 to 199, 220 to 237, 267 to 289, and 296 to 318; these read LLLT…GFWT, IGLF…WLAH, WLLL…GQWR, FLLG…THYL, LSVL…AYWL, LPAK…ATLW, and PVIG…PALV. 2 disordered regions span residues 884-908 and 943-1000; these read AETE…NPTV and EALQ…ADTG. Positions 888–897 are enriched in acidic residues; it reads QPPDEGDDTT. Basic and acidic residues-rich tracts occupy residues 943–953 and 963–984; these read EALQRAEDAQA and NGDD…DKAG.

This sequence belongs to the UPF0182 family.

The protein localises to the cell membrane. The sequence is that of UPF0182 protein SCO5204 from Streptomyces coelicolor (strain ATCC BAA-471 / A3(2) / M145).